Consider the following 458-residue polypeptide: UPF0210 protein Maeo_1412 (458 aa).

Belongs to the UPF0210 family.

This chain is UPF0210 protein Maeo_1412, found in Methanococcus aeolicus (strain ATCC BAA-1280 / DSM 17508 / OCM 812 / Nankai-3).